The sequence spans 311 residues: Beta-lactamase (311 aa).

Positions 1–34 (MRLTQAPPSRRTLMTLGAGATMAALLPAGGAAYA) form a signal peptide, tat-type signal. Serine 87 serves as the catalytic Acyl-ester intermediate. 255 to 257 (KTG) contacts substrate.

This sequence belongs to the class-A beta-lactamase family. Predicted to be exported by the Tat system. The position of the signal peptide cleavage has not been experimentally proven.

It carries out the reaction a beta-lactam + H2O = a substituted beta-amino acid. The protein is Beta-lactamase (bla) of Kitasatospora aureofaciens (Streptomyces aureofaciens).